Here is a 2197-residue protein sequence, read N- to C-terminus: Activating signal cointegrator 1 complex subunit 3 (2197 aa).

Residue Ser12 is modified to Phosphoserine. 2 coiled-coil regions span residues 18–80 (KQDN…AKQI) and 328–356 (IQSEQEKQLMKQYRREEKRIARREKKAGE). In terms of domain architecture, Helicase ATP-binding 1 spans 487–670 (DTAYNTNENM…FLHVNPYIGL (184 aa)). 500–507 (APTGAGKT) is an ATP binding site. At Lys573 the chain carries N6-acetyllysine. The DEVH box motif lies at 612-615 (DEVH). The 219-residue stretch at 697-915 (QLNNMDEVCY…GTVTNVEEAV (219 aa)) folds into the Helicase C-terminal 1 domain. Residues 979 to 1288 (STDLGRTASH…GAEAVCIINF (310 aa)) enclose the SEC63 1 domain. Residues 1337-1512 (HTLYHTDCNV…WLNIKQMGLF (176 aa)) form the Helicase ATP-binding 2 domain. 1350-1357 (APTGSGKT) lines the ATP pocket. Residues 1454–1457 (DEIH) carry the DEIH box motif. One can recognise a Helicase C-terminal 2 domain in the interval 1565–1739 (RMLSSMTKLE…VLSDHLNAEI (175 aa)). Residues 1812–2175 (PLTCGRIASY…YLGLDQQYDI (364 aa)) form the SEC63 2 domain.

It belongs to the helicase family. In terms of assembly, identified in the ASCC complex that contains ASCC1, ASCC2 and ASCC3. Functions as a scaffolding subunit that interacts directly with both ASCC1 and ASCC2. Interacts directly with ALKBH3, and thereby recruits ALKBH3 to the ASCC complex. Part of the ASC-1/TRIP4 complex, that contains TRIP4, ASCC1, ASCC2 and ASCC3. Part of the RQT (ribosome quality control trigger) complex, that contains ASCC2, ASCC3 and TRIP4. Associates with ribosomes; recruited to collided ribosomes. Interacts with ZCCHC4. Interacts with ZNF598. Interacts with RPS3.

It is found in the nucleus. Its subcellular location is the nucleus speckle. The protein localises to the cytoplasm. It localises to the cytosol. The enzyme catalyses Couples ATP hydrolysis with the unwinding of duplex DNA by translocating in the 3'-5' direction.. The catalysed reaction is ATP + H2O = ADP + phosphate + H(+). In terms of biological role, ATPase involved both in DNA repair and rescue of stalled ribosomes. 3'-5' DNA helicase involved in repair of alkylated DNA: promotes DNA unwinding to generate single-stranded substrate needed for ALKBH3, enabling ALKBH3 to process alkylated N3-methylcytosine (3mC) within double-stranded regions. Also involved in activation of the ribosome quality control (RQC) pathway, a pathway that degrades nascent peptide chains during problematic translation. Drives the splitting of stalled ribosomes that are ubiquitinated in a ZNF598-dependent manner, as part of the ribosome quality control trigger (RQT) complex. Part of the ASC-1 complex that enhances NF-kappa-B, SRF and AP1 transactivation. The chain is Activating signal cointegrator 1 complex subunit 3 (Ascc3) from Rattus norvegicus (Rat).